A 284-amino-acid chain; its full sequence is Avenin-like b10 (284 aa).

Positions 1–18 (MKVFILALLALAATTAIA) are cleaved as a signal peptide.

It belongs to the prolamin family. In terms of processing, contains disulfide bonds.

Seed storage protein. Might be integrated via inter-chain disulfide bonds within the glutenin polymer. This Triticum aestivum (Wheat) protein is Avenin-like b10.